The chain runs to 326 residues: Zona pellucida-binding protein 2 (326 aa).

The N-terminal stretch at 1–19 (MLAWALLYAVLWSLAGVGS) is a signal peptide. 3 N-linked (GlcNAc...) asparagine glycosylation sites follow: Asn86, Asn220, and Asn256.

It belongs to the zona pellucida-binding protein Sp38 family. Post-translationally, N-glycosylated. In terms of tissue distribution, expressed specifically in male germ cells.

It localises to the cytoplasmic vesicle. The protein resides in the secretory vesicle. The protein localises to the acrosome. It is found in the secreted. Is implicated in sperm-oocyte interaction during fertilization. The chain is Zona pellucida-binding protein 2 (Zpbp2) from Mus musculus (Mouse).